A 78-amino-acid polypeptide reads, in one-letter code: Probable [Fe-S]-dependent transcriptional repressor (78 aa).

Iron-sulfur cluster is bound by residues Cys56, Cys61, Cys64, and Cys70.

The protein belongs to the FeoC family.

Functionally, may function as a transcriptional regulator that controls feoABC expression. The sequence is that of Probable [Fe-S]-dependent transcriptional repressor from Escherichia coli (strain UTI89 / UPEC).